The primary structure comprises 381 residues: L-lactate dehydrogenase (381 aa).

The FMN hydroxy acid dehydrogenase domain occupies M1–G380. Y24 contacts substrate. Residues S106 and Q127 each contribute to the FMN site. Y129 serves as a coordination point for substrate. FMN is bound at residue T155. R164 contacts substrate. Residue K251 coordinates FMN. H275 serves as the catalytic Proton acceptor. R278 contacts substrate. D306 to R330 is a binding site for FMN.

It belongs to the FMN-dependent alpha-hydroxy acid dehydrogenase family. As to quaternary structure, homotetramer. The cofactor is FMN.

It is found in the cell inner membrane. The enzyme catalyses (S)-lactate + A = pyruvate + AH2. Its function is as follows. Catalyzes the conversion of L-lactate to pyruvate. Is coupled to the respiratory chain. The polypeptide is L-lactate dehydrogenase (Pseudomonas paraeruginosa (strain DSM 24068 / PA7) (Pseudomonas aeruginosa (strain PA7))).